The sequence spans 126 residues: Large ribosomal subunit protein uL22 (126 aa).

Belongs to the universal ribosomal protein uL22 family. As to quaternary structure, part of the 50S ribosomal subunit.

Functionally, this protein binds specifically to 23S rRNA; its binding is stimulated by other ribosomal proteins, e.g. L4, L17, and L20. It is important during the early stages of 50S assembly. It makes multiple contacts with different domains of the 23S rRNA in the assembled 50S subunit and ribosome. In terms of biological role, the globular domain of the protein is located near the polypeptide exit tunnel on the outside of the subunit, while an extended beta-hairpin is found that lines the wall of the exit tunnel in the center of the 70S ribosome. The protein is Large ribosomal subunit protein uL22 of Maricaulis maris (strain MCS10) (Caulobacter maris).